The following is a 198-amino-acid chain: Holliday junction branch migration complex subunit RuvA (198 aa).

The domain I stretch occupies residues 1–61; that stretch reads MTLYKIGEIV…DYIQQTYGFK (61 aa). A domain II region spans residues 62–139; that stretch reads TFKERLLFTD…KIIQNKEVKK (78 aa). A flexible linker region spans residues 140–144; that stretch reads FDDIT. The interval 144-198 is domain III; sequence TNIKELKQTLNKLGFKASDIDYAVNNISSTKELDLMVEESINLITTQMHANNQTT.

It belongs to the RuvA family. Homotetramer. Forms an RuvA(8)-RuvB(12)-Holliday junction (HJ) complex. HJ DNA is sandwiched between 2 RuvA tetramers; dsDNA enters through RuvA and exits via RuvB. An RuvB hexamer assembles on each DNA strand where it exits the tetramer. Each RuvB hexamer is contacted by two RuvA subunits (via domain III) on 2 adjacent RuvB subunits; this complex drives branch migration. In the full resolvosome a probable DNA-RuvA(4)-RuvB(12)-RuvC(2) complex forms which resolves the HJ.

It is found in the cytoplasm. In terms of biological role, the RuvA-RuvB-RuvC complex processes Holliday junction (HJ) DNA during genetic recombination and DNA repair, while the RuvA-RuvB complex plays an important role in the rescue of blocked DNA replication forks via replication fork reversal (RFR). RuvA specifically binds to HJ cruciform DNA, conferring on it an open structure. The RuvB hexamer acts as an ATP-dependent pump, pulling dsDNA into and through the RuvAB complex. HJ branch migration allows RuvC to scan DNA until it finds its consensus sequence, where it cleaves and resolves the cruciform DNA. In Mycoplasmopsis synoviae (strain 53) (Mycoplasma synoviae), this protein is Holliday junction branch migration complex subunit RuvA.